We begin with the raw amino-acid sequence, 639 residues long: Elongation factor 4 (639 aa).

One can recognise a tr-type G domain in the interval 39–221 (TMIRNFCIIA…EIVRRVPAPV (183 aa)). Residues 51–56 (DHGKST) and 168–171 (NKID) contribute to the GTP site.

It belongs to the TRAFAC class translation factor GTPase superfamily. Classic translation factor GTPase family. LepA subfamily.

Its subcellular location is the cell membrane. It carries out the reaction GTP + H2O = GDP + phosphate + H(+). Required for accurate and efficient protein synthesis under certain stress conditions. May act as a fidelity factor of the translation reaction, by catalyzing a one-codon backward translocation of tRNAs on improperly translocated ribosomes. Back-translocation proceeds from a post-translocation (POST) complex to a pre-translocation (PRE) complex, thus giving elongation factor G a second chance to translocate the tRNAs correctly. Binds to ribosomes in a GTP-dependent manner. The polypeptide is Elongation factor 4 (Frankia casuarinae (strain DSM 45818 / CECT 9043 / HFP020203 / CcI3)).